The chain runs to 262 residues: Proenkephalin-A-A (262 aa).

An N-terminal signal peptide occupies residues 1-24 (MGLEARHCCMFLLVFASLSVEIRA). Disulfide bonds link C26–C48, C30–C52, and C33–C65. 5 propeptides span residues 110-131 (MDELYHAEPEEDDAGGEILAKN), 139-177 (EYDSDRDAADLLRELLATSGDPESSIYHDNNSETPGEIN), 190-201 (STDLEDETSGIQ), 211-221 (VGRPEWWEDYQ), and 229-253 (TRFTDSFLPSDEDGESYSKENPDME).

This sequence belongs to the opioid neuropeptide precursor family. Post-translationally, the N-terminal domain contains 6 conserved cysteines thought to be involved in disulfide bonding and/or processing.

The protein resides in the secreted. Functionally, enkephalin neuropeptides compete with and mimic the effects of opiate drugs. They play a role in a number of physiologic functions, including pain perception and responses to stress. This is Proenkephalin-A-A (penk-a) from Xenopus laevis (African clawed frog).